The primary structure comprises 675 residues: DNA ligase (675 aa).

NAD(+) contacts are provided by residues 32–36 (DAEYD), 81–82 (SL), and E113. Catalysis depends on K115, which acts as the N6-AMP-lysine intermediate. Residues R136, E173, K291, and K315 each contribute to the NAD(+) site. Zn(2+) is bound by residues C409, C412, C427, and C433. A BRCT domain is found at 595-675 (SEKTYFFNKK…ELNSLIRIKE (81 aa)).

Belongs to the NAD-dependent DNA ligase family. LigA subfamily. Mg(2+) serves as cofactor. The cofactor is Mn(2+).

The catalysed reaction is NAD(+) + (deoxyribonucleotide)n-3'-hydroxyl + 5'-phospho-(deoxyribonucleotide)m = (deoxyribonucleotide)n+m + AMP + beta-nicotinamide D-nucleotide.. DNA ligase that catalyzes the formation of phosphodiester linkages between 5'-phosphoryl and 3'-hydroxyl groups in double-stranded DNA using NAD as a coenzyme and as the energy source for the reaction. It is essential for DNA replication and repair of damaged DNA. This is DNA ligase from Buchnera aphidicola subsp. Acyrthosiphon pisum (strain 5A).